The chain runs to 369 residues: Molybdenum import ATP-binding protein ModC (369 aa).

Positions 4–239 constitute an ABC transporter domain; that stretch reads LQLRAVVADR…PRSRFGARIA (236 aa). 31–38 serves as a coordination point for ATP; the sequence is GPNGAGKS. The Mop domain maps to 293–361; the sequence is HGSPRNIVGL…VKAQEVALHP (69 aa).

The protein belongs to the ABC transporter superfamily. Molybdate importer (TC 3.A.1.8) family. The complex is composed of two ATP-binding proteins (ModC), two transmembrane proteins (ModB) and a solute-binding protein (ModA).

It is found in the cell membrane. It carries out the reaction molybdate(out) + ATP + H2O = molybdate(in) + ADP + phosphate + H(+). Part of the ABC transporter complex ModABC involved in molybdenum import. Responsible for energy coupling to the transport system. The chain is Molybdenum import ATP-binding protein ModC from Mycobacterium tuberculosis (strain CDC 1551 / Oshkosh).